The primary structure comprises 156 residues: Ribosome maturation factor RimP (156 aa).

Belongs to the RimP family.

It localises to the cytoplasm. In terms of biological role, required for maturation of 30S ribosomal subunits. This Treponema pallidum (strain Nichols) protein is Ribosome maturation factor RimP.